Here is a 1402-residue protein sequence, read N- to C-terminus: DNA-directed RNA polymerase subunit beta' (1402 aa).

Zn(2+) is bound by residues Cys-72, Cys-74, Cys-87, and Cys-90. Positions 463, 465, and 467 each coordinate Mg(2+). Zn(2+) is bound by residues Cys-811, Cys-885, Cys-892, and Cys-895.

The protein belongs to the RNA polymerase beta' chain family. As to quaternary structure, the RNAP catalytic core consists of 2 alpha, 1 beta, 1 beta' and 1 omega subunit. When a sigma factor is associated with the core the holoenzyme is formed, which can initiate transcription. Mg(2+) is required as a cofactor. Zn(2+) serves as cofactor.

The catalysed reaction is RNA(n) + a ribonucleoside 5'-triphosphate = RNA(n+1) + diphosphate. Functionally, DNA-dependent RNA polymerase catalyzes the transcription of DNA into RNA using the four ribonucleoside triphosphates as substrates. This chain is DNA-directed RNA polymerase subunit beta', found in Paracoccus denitrificans (strain Pd 1222).